The sequence spans 454 residues: MASPSHPSRDCSQVIDHSHVPEFEVATWIKITLILVYLVIFVVGILGNSVTIRVTQVLQKKGYLQKEVTDHMVSLACSDILVFLIGMPMEFYSIIWNPLTTPSYTVSCKVHTFLFEACSYATLLHVLTLSFERYIAICHPFRYKAMSGPCQVKLLIGFVWVTSALVALPLLFAMGVEYPLVNVPSHRGLICNRSRTRHQEQPESSNMSICTNLSSRWTVFQSSIFSAFVVYLVVLVSVAFMCWSMMQVLRRSKQGTLAAQGQQLQLRKLESQESRSARRQTIIFLELIVVTLAVCWMPNQVRRIMAAAKPKHDWTKSYFRAYMILLPFSDTFFYLSSVVNPLLYNVSSQQFRSVFGQVLRCQLTLPHANQEKHLRAHVASTMDSTRSACRPLIFPASQRSSSSARANMVFLSTFHSEAKPESKPQELSCESPEPNSERKPANPATRNGFQEHEV.

The Extracellular portion of the chain corresponds to 1–34 (MASPSHPSRDCSQVIDHSHVPEFEVATWIKITLI). 2 cysteine pairs are disulfide-bonded: Cys-11-Cys-191 and Cys-108-Cys-210. Zn(2+)-binding residues include His-17 and His-19. The chain crosses the membrane as a helical span at residues 35-55 (LVYLVIFVVGILGNSVTIRVT). The Cytoplasmic segment spans residues 56–69 (QVLQKKGYLQKEVT). Residues 70 to 89 (DHMVSLACSDILVFLIGMPM) form a helical membrane-spanning segment. The Extracellular segment spans residues 90–109 (EFYSIIWNPLTTPSYTVSCK). Residues 110 to 131 (VHTFLFEACSYATLLHVLTLSF) traverse the membrane as a helical segment. The Cytoplasmic segment spans residues 132–151 (ERYIAICHPFRYKAMSGPCQ). The chain crosses the membrane as a helical span at residues 152-172 (VKLLIGFVWVTSALVALPLLF). The Extracellular portion of the chain corresponds to 173 to 217 (AMGVEYPLVNVPSHRGLICNRSRTRHQEQPESSNMSICTNLSSRW). Asn-192, Asn-206, and Asn-212 each carry an N-linked (GlcNAc...) asparagine glycan. The helical transmembrane segment at 218–242 (TVFQSSIFSAFVVYLVVLVSVAFMC) threads the bilayer. Topologically, residues 243-283 (WSMMQVLRRSKQGTLAAQGQQLQLRKLESQESRSARRQTII) are cytoplasmic. A helical membrane pass occupies residues 284-305 (FLELIVVTLAVCWMPNQVRRIM). Residues 306–323 (AAAKPKHDWTKSYFRAYM) lie on the Extracellular side of the membrane. A helical transmembrane segment spans residues 324-344 (ILLPFSDTFFYLSSVVNPLLY). Over 345–454 (NVSSQQFRSV…TRNGFQEHEV (110 aa)) the chain is Cytoplasmic. A Phosphoserine modification is found at Ser-397. The tract at residues 415 to 454 (HSEAKPESKPQELSCESPEPNSERKPANPATRNGFQEHEV) is disordered.

The protein belongs to the G-protein coupled receptor 1 family. In terms of assembly, interacts with HTR1A. Interacts with GALR1. Detected in liver, kidney, abomasum, uterus, small intestine and colon.

It localises to the cell membrane. In terms of biological role, zinc-sensing receptor that can sense changes in extracellular Zn(2+), mediate Zn(2+) signal transmission, and participates in the regulation of numerous physiological processes including glucose homeostasis regulation, gastrointestinal mobility, hormone secretion and cell death. Activation by Zn(2+) in keratinocytes increases the intracellular concentration of Ca(2+) and activates the ERK/MAPK and PI3K/AKT signaling pathways leading to epithelial repair. Plays an essential role in normal wound healing by inducing the production of cytokines including the major inflammatory cytokine IL6 via the PKC/MAPK/CEBPB pathway. Regulates adipose tissue metabolism, especially lipolysis, and regulates the function of lipases, such as hormone-sensitive lipase and adipose triglyceride lipase. Plays a role in the inhibition of cell death and protects against oxidative, endoplasmic reticulum and mitochondrial stress by inducing secretion of the cytoprotective pigment epithelium-derived growth factor (PEDF) and probably other protective transcripts in a GNA13/RHOA/SRE-dependent manner. Forms dynamic heteroreceptor complexes with HTR1A and GALR1 depending on cell type or specific physiological states, resulting in signaling diversity: HTR1A-GPR39 shows additive increase in signaling along the serum response element (SRE) and NF-kappa-B pathways while GALR1 acts as an antagonist blocking SRE. This is G-protein coupled receptor 39 (GPR39) from Bos taurus (Bovine).